Reading from the N-terminus, the 183-residue chain is Helofensin-1 (183 aa).

The signal sequence occupies residues 1 to 26 (MQMDWLFIAVVSAIGLLSSGVPGTQG). Residues 27-64 (AYTTEQCRALNGTCRFYACFPKNVVIGKCDWLGWGCCA) form a C(6)C(4)C(9)C(6)CC 1; approximate repeat. One copy of the C(6)C(4)C(9)C(6)CC 2; approximate repeat lies at 65-101 (RTPLERCTAKKGTCTASGCTETDTDHGPCDGGAQCCQ). The stretch at 102–139 (RDPVKYCKFHGNVCGRGKCPMDHIPIGEQCMPGYPCCK) is one C(6)C(4)C(9)C(6)CC 3; approximate repeat. Residues 140-177 (RDGPAYCKSKGGKCLRRCSQIVPTDIIGVCADGVPCCK) form a C(6)C(4)C(9)C(6)CC 4; approximate repeat.

This sequence belongs to the beta-defensin family. Helofensin subfamily. As to expression, expressed by the mandibular venom gland.

It localises to the secreted. In terms of biological role, lethal toxin which possesses an inhibitory effect on direct electrical stimulation of the isolated hemi-diaphragm of mice. Neither hemorrhagic nor hemolytic activities are detected. Phospholipase A2 activity, proteolytic activity and arginine esterolytic activity are absent. In Heloderma suspectum cinctum (Banded Gila monster), this protein is Helofensin-1.